Here is a 489-residue protein sequence, read N- to C-terminus: Siroheme synthase (489 aa).

Positions 1–203 (MDFFPVFMRL…GREDAARETL (203 aa)) are precorrin-2 dehydrogenase /sirohydrochlorin ferrochelatase. NAD(+) is bound by residues 22 to 23 (PV) and 43 to 44 (PA). The tract at residues 218–489 (GEVFLVGAGP…ARSSTEGAEA (272 aa)) is uroporphyrinogen-III C-methyltransferase. Position 227 (proline 227) interacts with S-adenosyl-L-methionine. The active-site Proton acceptor is the aspartate 250. Lysine 272 serves as the catalytic Proton donor. S-adenosyl-L-methionine is bound by residues 303–305 (GGD), isoleucine 308, 333–334 (TA), methionine 385, and glycine 414.

This sequence in the N-terminal section; belongs to the precorrin-2 dehydrogenase / sirohydrochlorin ferrochelatase family. In the C-terminal section; belongs to the precorrin methyltransferase family.

The enzyme catalyses uroporphyrinogen III + 2 S-adenosyl-L-methionine = precorrin-2 + 2 S-adenosyl-L-homocysteine + H(+). The catalysed reaction is precorrin-2 + NAD(+) = sirohydrochlorin + NADH + 2 H(+). It catalyses the reaction siroheme + 2 H(+) = sirohydrochlorin + Fe(2+). It functions in the pathway cofactor biosynthesis; adenosylcobalamin biosynthesis; precorrin-2 from uroporphyrinogen III: step 1/1. Its pathway is cofactor biosynthesis; adenosylcobalamin biosynthesis; sirohydrochlorin from precorrin-2: step 1/1. It participates in porphyrin-containing compound metabolism; siroheme biosynthesis; precorrin-2 from uroporphyrinogen III: step 1/1. The protein operates within porphyrin-containing compound metabolism; siroheme biosynthesis; siroheme from sirohydrochlorin: step 1/1. It functions in the pathway porphyrin-containing compound metabolism; siroheme biosynthesis; sirohydrochlorin from precorrin-2: step 1/1. Its function is as follows. Multifunctional enzyme that catalyzes the SAM-dependent methylations of uroporphyrinogen III at position C-2 and C-7 to form precorrin-2 via precorrin-1. Then it catalyzes the NAD-dependent ring dehydrogenation of precorrin-2 to yield sirohydrochlorin. Finally, it catalyzes the ferrochelation of sirohydrochlorin to yield siroheme. This Thioalkalivibrio sulfidiphilus (strain HL-EbGR7) protein is Siroheme synthase.